Here is a 180-residue protein sequence, read N- to C-terminus: Signal peptidase complex subunit 3 (180 aa).

The Cytoplasmic portion of the chain corresponds to 1 to 12; sequence MHNLLSRANSLL. The helical; Signal-anchor for type II membrane protein transmembrane segment at 13–33 threads the bilayer; that stretch reads AFTLWVMAAVTAACFLSTVFL. The Lumenal segment spans residues 34–180; the sequence is DYTVSNHLEV…PTTYTTTRRS (147 aa). N-linked (GlcNAc...) asparagine glycosylation is present at Asn141.

The protein belongs to the SPCS3 family. As to quaternary structure, component of the signal peptidase complex (SPC) composed of a catalytic subunit sec-11 and three accessory subunits spcs-1, spcs-2 and spcs-3. The complex induces a local thinning of the ER membrane which is used to measure the length of the signal peptide (SP) h-region of protein substrates. This ensures the selectivity of the complex towards h-regions shorter than 18-20 amino acids.

The protein localises to the endoplasmic reticulum membrane. Essential component of the signal peptidase complex (SPC) which catalyzes the cleavage of N-terminal signal sequences from nascent proteins as they are translocated into the lumen of the endoplasmic reticulum. Essential for the SPC catalytic activity, possibly by stabilizing and positioning the active center of the complex close to the lumenal surface. This chain is Signal peptidase complex subunit 3, found in Caenorhabditis briggsae.